The chain runs to 344 residues: Phenylalanine--tRNA ligase alpha subunit (344 aa).

A Mg(2+)-binding site is contributed by glutamate 255.

It belongs to the class-II aminoacyl-tRNA synthetase family. Phe-tRNA synthetase alpha subunit type 1 subfamily. In terms of assembly, tetramer of two alpha and two beta subunits. Requires Mg(2+) as cofactor.

It localises to the cytoplasm. The catalysed reaction is tRNA(Phe) + L-phenylalanine + ATP = L-phenylalanyl-tRNA(Phe) + AMP + diphosphate + H(+). The protein is Phenylalanine--tRNA ligase alpha subunit of Persephonella marina (strain DSM 14350 / EX-H1).